A 391-amino-acid chain; its full sequence is 3-ketoacyl-CoA thiolase (391 aa).

The active-site Acyl-thioester intermediate is Cys-95. Active-site proton acceptor residues include His-347 and Cys-377.

This sequence belongs to the thiolase-like superfamily. Thiolase family. As to quaternary structure, heterotetramer of two alpha chains (FadB) and two beta chains (FadA).

Its subcellular location is the cytoplasm. The catalysed reaction is an acyl-CoA + acetyl-CoA = a 3-oxoacyl-CoA + CoA. Its pathway is lipid metabolism; fatty acid beta-oxidation. Functionally, catalyzes the final step of fatty acid oxidation in which acetyl-CoA is released and the CoA ester of a fatty acid two carbons shorter is formed. This is 3-ketoacyl-CoA thiolase from Pseudomonas aeruginosa (strain ATCC 15692 / DSM 22644 / CIP 104116 / JCM 14847 / LMG 12228 / 1C / PRS 101 / PAO1).